We begin with the raw amino-acid sequence, 331 residues long: Peroxisomal nicotinamide adenine dinucleotide carrier (331 aa).

Solcar repeat units lie at residues 2 to 91, 109 to 216, and 229 to 320; these read SDAL…FRNR, VGMF…MLTK, and VTAL…LVKG. 6 consecutive transmembrane segments (helical) span residues 5–25, 63–85, 116–136, 180–200, 235–255, and 293–313; these read LING…TYPL, LYGG…YYFY, LVAA…WVIV, VYDE…LIMV, FLLG…LLVV, and YKGM…LFMI.

This sequence belongs to the mitochondrial carrier (TC 2.A.29) family. In terms of assembly, homodimer. As to expression, expressed in cotyledons, hypocotyls, vascular tissues, trichomes, hydathodes, seeds, pedicels, flowers and stigma.

It localises to the glyoxysome membrane. With respect to regulation, inhibited by pyridoxal 5'-phosphate, bathophenanthroline, tannic acid, mersalyl, mercuric chloride and bromocresol purple. In terms of biological role, mediates the NAD(+) import into peroxisomes. Favors the NAD(+)(in)/AMP(out) antiport exchange, but is also able to catalyze a low unidirectional transport that might be essential under special conditions. Transports CoA, dephospho-CoA, acetyl-CoA, adenosine 3',5'-diphosphate (PAP), NAD(+), AMP, ADP and NADH, but has no activity with ATP, GTP, GDP, NADPH, NADP(+) or FAD. Required for peroxisomes proliferation. The chain is Peroxisomal nicotinamide adenine dinucleotide carrier (PXN) from Arabidopsis thaliana (Mouse-ear cress).